The chain runs to 305 residues: Probable lipid kinase YegS-like (305 aa).

Positions 1-129 (MTQRRAMLIL…VDLGEVGGKL (129 aa)) constitute a DAGKc domain. Residues threonine 39, 65–71 (GDGTLRD), and threonine 92 contribute to the ATP site. Positions 210, 213, and 215 each coordinate Mg(2+). The Proton acceptor role is filled by glutamate 268.

Belongs to the diacylglycerol/lipid kinase family. YegS lipid kinase subfamily. It depends on Mg(2+) as a cofactor. The cofactor is Ca(2+).

It localises to the cytoplasm. In terms of biological role, probably phosphorylates lipids; the in vivo substrate is unknown. This Pseudomonas syringae pv. tomato (strain ATCC BAA-871 / DC3000) protein is Probable lipid kinase YegS-like.